A 152-amino-acid chain; its full sequence is Large ribosomal subunit protein uL11 (152 aa).

It belongs to the universal ribosomal protein uL11 family. In terms of assembly, part of the ribosomal stalk of the 50S ribosomal subunit. Interacts with L10 and the large rRNA to form the base of the stalk. L10 forms an elongated spine to which L12 dimers bind in a sequential fashion forming a multimeric L10(L12)X complex. In terms of processing, one or more lysine residues are methylated.

Functionally, forms part of the ribosomal stalk which helps the ribosome interact with GTP-bound translation factors. The protein is Large ribosomal subunit protein uL11 of Mycoplasmoides gallisepticum (strain R(low / passage 15 / clone 2)) (Mycoplasma gallisepticum).